A 165-amino-acid polypeptide reads, in one-letter code: RxLR effector protein CRE12 (165 aa).

The first 23 residues, 1 to 23 (MRLAAFVLVAVAFAIIPDGRVSA), serve as a signal peptide directing secretion. Positions 40 to 59 (RLLRLNAVPQPVETGNQEER) match the RxLR-dEER motif.

This sequence belongs to the RxLR effector family.

It is found in the secreted. The protein resides in the host cell. In terms of biological role, effector that is involved in host plant infection. Contributes to virulence during the early infection stage, by inhibiting plant defense responses induced by both PAMP-triggered immunity (PTI) and effector-triggered immunity (ETI). This Phytophthora infestans (strain T30-4) (Potato late blight agent) protein is RxLR effector protein CRE12.